The sequence spans 593 residues: Arginine--tRNA ligase (593 aa).

Residues 138–148 (ANPTGPLHVGH) carry the 'HIGH' region motif.

The protein belongs to the class-I aminoacyl-tRNA synthetase family. In terms of assembly, monomer.

It localises to the cytoplasm. It carries out the reaction tRNA(Arg) + L-arginine + ATP = L-arginyl-tRNA(Arg) + AMP + diphosphate. The protein is Arginine--tRNA ligase of Burkholderia cenocepacia (strain ATCC BAA-245 / DSM 16553 / LMG 16656 / NCTC 13227 / J2315 / CF5610) (Burkholderia cepacia (strain J2315)).